Here is a 386-residue protein sequence, read N- to C-terminus: ATP phosphoribosyltransferase regulatory subunit (386 aa).

The protein belongs to the class-II aminoacyl-tRNA synthetase family. HisZ subfamily. As to quaternary structure, heteromultimer composed of HisG and HisZ subunits.

The protein localises to the cytoplasm. The protein operates within amino-acid biosynthesis; L-histidine biosynthesis; L-histidine from 5-phospho-alpha-D-ribose 1-diphosphate: step 1/9. In terms of biological role, required for the first step of histidine biosynthesis. May allow the feedback regulation of ATP phosphoribosyltransferase activity by histidine. This chain is ATP phosphoribosyltransferase regulatory subunit, found in Limosilactobacillus fermentum (strain NBRC 3956 / LMG 18251) (Lactobacillus fermentum).